A 488-amino-acid chain; its full sequence is MKKKLAAGLTASAIVGTTLVVTPAEAATIKVKSGDSLWKLAQTYNTSVAALTSANHLSTTVLSIGQTLTIPGSKSSTSSSTSSSTTKKSGSSVYTVKSGDSLWLIANEFKMTVQELKKLNGLSSDLIRAGQKLKVSGTVSSSSSSSKKSNSNKSSSSSSKSSSNKSSSSSSSTGTYKVQLGDSLWKIANKVNMSIAELKVLNNLKSDTIYVNQVLKTKSSGSDTSSKDNSSKSNQTSATTKYTVKSGDSLWKIANNYNLTVQQIRNINNLKSDVLYVGQVLKLTGKASSGSSSSSSSSSNASSGTTTTYTVKSGDSLWVIAQKFNVTAQQIREKNNLKTDVLQVGQKLVISGKASSSSSSGSSNTTSSTSAKINTMISAAKAQLGVPYRWGGTTPSGFDCSGFIYYVLNKVTSVSRLTAAGYWNTMKSVSQPAVGDFVFFSTYKAGPSHVGIYLGNGEFINANDSGVVISNMNNSYWKQRYLGAKRYF.

Positions 1–26 are cleaved as a signal peptide; the sequence is MKKKLAAGLTASAIVGTTLVVTPAEA. LysM domains follow at residues 27–70 and 92–135; these read ATIK…TLTI and SVYT…KLKV. Disordered regions lie at residues 70 to 93, 137 to 176, and 218 to 239; these read IPGS…GSSV, GTVS…TGTY, and KSSG…TSAT. Low complexity-rich tracts occupy residues 72-93 and 140-172; these read GSKS…GSSV and SSSS…SSSS. One can recognise a LysM 3 domain in the interval 174 to 217; the sequence is GTYKVQLGDSLWKIANKVNMSIAELKVLNNLKSDTIYVNQVLKT. In terms of domain architecture, LysM 4 spans 240–283; it reads TKYTVKSGDSLWKIANNYNLTVQQIRNINNLKSDVLYVGQVLKL. Residues 286-306 are disordered; it reads KASSGSSSSSSSSSNASSGTT. The region spanning 307–350 is the LysM 5 domain; it reads TTYTVKSGDSLWVIAQKFNVTAQQIREKNNLKTDVLQVGQKLVI. The 119-residue stretch at 370–488 folds into the NlpC/P60 domain; sequence SAKINTMISA…QRYLGAKRYF (119 aa). The active-site Nucleophile is the Cys-400. His-449 (proton acceptor) is an active-site residue. Asn-461 is a catalytic residue.

It belongs to the peptidase C40 family.

The protein localises to the secreted. The protein resides in the cell wall. With respect to regulation, is inhibited in vitro by para-hydroxymercuribenzoate, a sulfydryl inhibitor. Functionally, cell wall hydrolase that cleaves gamma-D-glutamate-meso-diaminopimelate bonds in peptidoglycan. LytF is necessary and sufficient for vegetative daughter cell separation, and also seems to play a role in cell autolysis. The chain is Peptidoglycan endopeptidase LytF (lytF) from Bacillus subtilis (strain 168).